Reading from the N-terminus, the 331-residue chain is Olfactory receptor 6K3 (331 aa).

The Extracellular segment spans residues 1-41 (MCWTMPSPFTGSSTRNMESGNQSTVTEFIFTGFPQLQDGSL). An N-linked (GlcNAc...) asparagine glycan is attached at Asn21. A helical membrane pass occupies residues 42 to 62 (LYFFPLLFIYTFIIIDNLLIF). Residues 63-70 (SAVRLDTH) are Cytoplasmic-facing. Residues 71–91 (LHNPMYNFISIFSFLEIWYTT) traverse the membrane as a helical segment. Over 92 to 115 (ATIPKMLSNLISEKKAISMTGCIL) the chain is Extracellular. Cys113 and Cys205 form a disulfide bridge. The helical transmembrane segment at 116-136 (QMYFFHSLENSEGILLTTMAI) threads the bilayer. Topologically, residues 137-155 (DRYVAICNPLRYQMIMTPR) are cytoplasmic. Residues 156–176 (LCAQLSAGSCLFGFLILLPEI) traverse the membrane as a helical segment. Residues 177–212 (VMISTLPFCGPNQIHQIFCDLVPVLSLACTDTSMIL) lie on the Extracellular side of the membrane. Residues 213 to 232 (IEDVIHAVTIIITFLIIALS) traverse the membrane as a helical segment. At 233 to 252 (YVRIVTVILRIPSSEGRQKA) the chain is on the cytoplasmic side. The helical transmembrane segment at 253–273 (FSTCAGHLMVFPIFFGSVSLM) threads the bilayer. Topologically, residues 274–286 (YLRFSDTYPPVLD) are extracellular. Residues 287–307 (TAIALMFTVLAPFFNPIIYSL) form a helical membrane-spanning segment. Residues 308-331 (RNKDMNNAIKKLFCLQKVLNKPGG) are Cytoplasmic-facing.

The protein belongs to the G-protein coupled receptor 1 family.

It is found in the cell membrane. Its function is as follows. Odorant receptor. The polypeptide is Olfactory receptor 6K3 (OR6K3) (Homo sapiens (Human)).